Here is a 111-residue protein sequence, read N- to C-terminus: Nucleoid-associated protein Cpar_0834 (111 aa).

Belongs to the YbaB/EbfC family. In terms of assembly, homodimer.

The protein resides in the cytoplasm. The protein localises to the nucleoid. Its function is as follows. Binds to DNA and alters its conformation. May be involved in regulation of gene expression, nucleoid organization and DNA protection. The chain is Nucleoid-associated protein Cpar_0834 from Chlorobaculum parvum (strain DSM 263 / NCIMB 8327) (Chlorobium vibrioforme subsp. thiosulfatophilum).